The following is a 116-amino-acid chain: Large ribosomal subunit protein bL19 (116 aa).

The protein belongs to the bacterial ribosomal protein bL19 family.

Its function is as follows. This protein is located at the 30S-50S ribosomal subunit interface and may play a role in the structure and function of the aminoacyl-tRNA binding site. The chain is Large ribosomal subunit protein bL19 from Clostridium botulinum (strain Eklund 17B / Type B).